The primary structure comprises 506 residues: Maturase K (506 aa).

This sequence belongs to the intron maturase 2 family. MatK subfamily.

It localises to the plastid. It is found in the chloroplast. Usually encoded in the trnK tRNA gene intron. Probably assists in splicing its own and other chloroplast group II introns. This chain is Maturase K, found in Empetrum nigrum (Black crowberry).